We begin with the raw amino-acid sequence, 202 residues long: Small ribosomal subunit protein uS4 (202 aa).

Positions 15 to 42 (LGDLPGLTRKAAKRSYPPGQHGQARRKR) are disordered. In terms of domain architecture, S4 RNA-binding spans 90–152 (SRLDNICFRL…KGSKQLAEGN (63 aa)).

This sequence belongs to the universal ribosomal protein uS4 family. In terms of assembly, part of the 30S ribosomal subunit. Contacts protein S5. The interaction surface between S4 and S5 is involved in control of translational fidelity.

Functionally, one of the primary rRNA binding proteins, it binds directly to 16S rRNA where it nucleates assembly of the body of the 30S subunit. In terms of biological role, with S5 and S12 plays an important role in translational accuracy. The sequence is that of Small ribosomal subunit protein uS4 from Synechococcus sp. (strain CC9902).